A 1252-amino-acid polypeptide reads, in one-letter code: Plasma membrane calcium-transporting ATPase mca-1 (1252 aa).

The Cytoplasmic segment spans residues 1-121; it reads MQKSQNVTAV…VRLVLDACKD (121 aa). The chain crosses the membrane as a helical span at residues 122 to 142; the sequence is PTLVILVLSGFINLALSFYEP. The Extracellular segment spans residues 143 to 180; the sequence is TSAAEDATQHLVNATTAAILANGTFMSTTEAPSEGHGT. 2 N-linked (GlcNAc...) asparagine glycosylation sites follow: asparagine 155 and asparagine 164. The chain crosses the membrane as a helical span at residues 181 to 201; it reads AWIEGVAILLCVIVVVLVTAV. At 202 to 376 the chain is on the cytoplasmic side; it reads NDYSKERQFR…KSVLQAKLSK (175 aa). The disordered stretch occupies residues 330–361; that stretch reads DDSTSTSSSSSSSSSSSGSSSNGSSDSSKSGD. The span at 333-357 shows a compositional bias: low complexity; sequence TSTSSSSSSSSSSSGSSSNGSSDSS. A helical membrane pass occupies residues 377–397; it reads LALQIIYCGTTIAIIALIVLV. Over 398–422 the chain is Extracellular; the sequence is TRFCLDHYVFEKNEFSLVDIQMFVK. The chain crosses the membrane as a helical span at residues 423-443; sequence FFIIAVTILVISIPEGLPLAI. Positions 432, 435, and 437 each coordinate Ca(2+). Residues 444 to 879 are Cytoplasmic-facing; that stretch reads ALALTYSVRK…GRNVYDSISK (436 aa). The 4-aspartylphosphate intermediate role is filled by aspartate 479. 2 residues coordinate Mg(2+): aspartate 479 and threonine 481. ATP is bound by residues threonine 481, glutamate 553, lysine 612, threonine 733, glycine 734, aspartate 735, arginine 792, and lysine 798. Aspartate 822 contributes to the Mg(2+) binding site. Asparagine 825 is an ATP binding site. Residues 880 to 900 traverse the membrane as a helical segment; the sequence is FLQFQLTVNVVAVITAFVGAV. Asparagine 888 is a binding site for Ca(2+). Residues 901–908 lie on the Extracellular side of the membrane; the sequence is TVSDSPLK. The chain crosses the membrane as a helical span at residues 909–929; sequence AVHMLWINLIMDTLASLALAT. Residues asparagine 916 and aspartate 920 each contribute to the Ca(2+) site. At 930–960 the chain is on the cytoplasmic side; that stretch reads EQPTDELLERKPYGRKKSLISRTMVKNILCH. Residues 961–981 traverse the membrane as a helical segment; the sequence is ALYQLIIIFVIFFYGDTIFGI. Residues 982 to 989 are Extracellular-facing; that stretch reads KTGLYAPL. A helical membrane pass occupies residues 990–1010; that stretch reads FAPPSQHFTLVFNAFVMMTVF. Residues 1011–1035 lie on the Cytoplasmic side of the membrane; sequence NEINARKVHGERNVFKGLASNRVFC. A helical transmembrane segment spans residues 1036–1056; the sequence is VIWVTTFIAQIIIVQFGGAWF. Residues 1057–1065 are Extracellular-facing; that stretch reads STAPLTLQQ. Residues 1066–1086 form a helical membrane-spanning segment; it reads WIVCLVLGFSTLIWGQIVATI. Topologically, residues 1087–1252 are cytoplasmic; that stretch reads PSKKLPKAWK…NVDMEDIELN (166 aa). The interval 1124-1142 is calmodulin-binding subdomain A; the sequence is LRRSGKSLWVRGMFIIGNH. The interval 1143–1152 is calmodulin-binding subdomain B; that stretch reads LRVLRAFGME. Residues 1181–1252 are disordered; the sequence is YRHQKHQEKK…NVDMEDIELN (72 aa).

Belongs to the cation transport ATPase (P-type) (TC 3.A.3) family. Type IIB subfamily. Interacts with calmodulin.

It localises to the cell membrane. It carries out the reaction Ca(2+)(in) + ATP + H2O = Ca(2+)(out) + ADP + phosphate + H(+). Functionally, catalyzes the hydrolysis of ATP coupled with the transport of calcium across a membrane. This Caenorhabditis elegans protein is Plasma membrane calcium-transporting ATPase mca-1.